Reading from the N-terminus, the 505-residue chain is Lysine--tRNA ligase (505 aa).

Residues Glu-415 and Glu-422 each contribute to the Mg(2+) site.

It belongs to the class-II aminoacyl-tRNA synthetase family. As to quaternary structure, homodimer. Requires Mg(2+) as cofactor.

The protein localises to the cytoplasm. It catalyses the reaction tRNA(Lys) + L-lysine + ATP = L-lysyl-tRNA(Lys) + AMP + diphosphate. The chain is Lysine--tRNA ligase (lysS) from Salmonella typhimurium (strain LT2 / SGSC1412 / ATCC 700720).